The sequence spans 55 residues: Large ribosomal subunit protein bL33 (55 aa).

This sequence belongs to the bacterial ribosomal protein bL33 family.

The polypeptide is Large ribosomal subunit protein bL33 (Parvibaculum lavamentivorans (strain DS-1 / DSM 13023 / NCIMB 13966)).